The sequence spans 321 residues: Glycerol-3-phosphate phosphatase (321 aa).

The active-site Nucleophile is the Asp-34. Residues Asp-34, Asp-36, and Asp-260 each coordinate Mg(2+). Asp-36 (proton donor) is an active-site residue.

This sequence belongs to the HAD-like hydrolase superfamily. CbbY/CbbZ/Gph/YieH family. Homodimer. Requires Mg(2+) as cofactor. In terms of tissue distribution, ubiquitously expressed with higher expression in testis, heart, skeletal muscle and islet tissue (at protein level).

The catalysed reaction is O-phospho-L-tyrosyl-[protein] + H2O = L-tyrosyl-[protein] + phosphate. It carries out the reaction sn-glycerol 1-phosphate + H2O = glycerol + phosphate. The enzyme catalyses sn-glycerol 3-phosphate + H2O = glycerol + phosphate. Inhibited by orthovanadate, beryllium trifluoride, Ca(2+) and EDTA. Glycerol-3-phosphate phosphatase hydrolyzing glycerol-3-phosphate into glycerol. Thereby, regulates the cellular levels of glycerol-3-phosphate a metabolic intermediate of glucose, lipid and energy metabolism. Was also shown to have a 2-phosphoglycolate phosphatase activity and a tyrosine-protein phosphatase activity. However, their physiological relevance is unclear. In vitro, also has a phosphatase activity toward ADP, ATP, GDP and GTP. In Mus musculus (Mouse), this protein is Glycerol-3-phosphate phosphatase.